The sequence spans 145 residues: Transcriptional regulator MraZ (145 aa).

2 SpoVT-AbrB domains span residues 5–49 and 78–121; these read TYNH…LESE and TYKV…AKEV.

This sequence belongs to the MraZ family. Forms oligomers.

The protein localises to the cytoplasm. It is found in the nucleoid. The chain is Transcriptional regulator MraZ from Ureaplasma urealyticum serovar 10 (strain ATCC 33699 / Western).